The following is a 341-amino-acid chain: Trace amine-associated receptor 13c (341 aa).

At 1–34 (MDLSSQEYDPSQFCFPAVNNSCLKGTHHVSTQTV) the chain is on the extracellular side. Residue Asn19 is glycosylated (N-linked (GlcNAc...) asparagine). 2 disulfides stabilise this stretch: Cys22–Cys186 and Cys105–Cys186. A helical membrane pass occupies residues 35 to 55 (VYLILASAMTVTVLGNSVVII). Residues 56 to 68 (SIAHFKQLQTPTN) lie on the Cytoplasmic side of the membrane. The chain crosses the membrane as a helical span at residues 69–89 (ILVMSLALADLLLGLVVMPFS). The Extracellular portion of the chain corresponds to 90–105 (MIRSVDGCWYYGETFC). Residues 106–126 (LLHTGFDLFLTSVSIFHLIFI) form a helical membrane-spanning segment. The Cytoplasmic portion of the chain corresponds to 127–147 (AVDRHQAVCFPLQYPTRITIP). The helical transmembrane segment at 148–168 (VAWVMVMISWSMAAFYSYGVV) threads the bilayer. Topologically, residues 169-195 (YSKANLEGLEEYIASVYCMGGCTLYFN) are extracellular. The helical transmembrane segment at 196-219 (ALWSVLDTLLTFFLPCSVMVGLYA) threads the bilayer. The Cytoplasmic portion of the chain corresponds to 220–257 (RIFVVAKKHIKSITEANQNENENVFKNPRRSERKAAKT). The helical transmembrane segment at 258–278 (LGIVVGAFILCWLPFFINSLV) threads the bilayer. Residues 279–292 (DPYINFSTPYALFD) are Extracellular-facing. N-linked (GlcNAc...) asparagine glycosylation is present at Asn283. Residues 293–313 (AFGWLGYTNSTLNPIIYGLFY) traverse the membrane as a helical segment. Residues 314–341 (PWFRKTLSLIVTLRIFEPNSSDINLFTV) are Cytoplasmic-facing.

It belongs to the G-protein coupled receptor 1 family. As to expression, expressed in olfactory epithelium (at protein level). Detected in a sparse population of olfactory sensory neurons.

The protein localises to the cell membrane. In terms of biological role, olfactory receptor for medium length odd-chained diamines including cadaverine which is generated by bacterial decarboxylation of the basic amino acid lysine and contributes to the odor of decomposing tissue. Mediates pronounced innate aversion behavior to cadaverine. This chain is Trace amine-associated receptor 13c, found in Danio rerio (Zebrafish).